The following is a 2241-amino-acid chain: GON-4-like protein (2241 aa).

2 disordered regions span residues 1-46 (MLPC…SSVS) and 122-259 (KLHA…GRGQ). Over residues 30 to 40 (SAVKPESDQVK) the composition is skewed to basic and acidic residues. A compositionally biased stretch (basic residues) spans 122-135 (KLHATGSKRGKKMT). The span at 143 to 152 (QEDRCDHLTL) shows a compositional bias: basic and acidic residues. Over residues 183-201 (PSGSQSAKPVSQPRKSTQP) the composition is skewed to polar residues. Residue Ser-206 is modified to Phosphoserine. Residues 243-255 (RRKKKKGTKRKRD) show a composition bias toward basic residues. Ser-346 is modified (phosphoserine). Positions 366–394 (EDDSSDEEYQPDDEEEDETAEESLLESDV) are enriched in acidic residues. Residues 366–460 (EDDSSDEEYQ…PPKPKQTRDS (95 aa)) form a disordered region. The tract at residues 600–1339 (EMGFSNMEDD…EEAREEISGS (740 aa)) is required for interaction with YY1, SIN3A and HDAC1, and transcriptional repression activity. The residue at position 775 (Ser-775) is a Phosphoserine. Disordered stretches follow at residues 1008-1031 (PSPS…SEAP) and 1111-1131 (RKPY…SPCM). Residues 1111–1125 (RKPYVRRRPSKRRGV) show a composition bias toward basic residues. Ser-1268 bears the Phosphoserine mark. Disordered stretches follow at residues 1301–1320 (ALEP…TPGD) and 1356–1601 (LDTG…RARA). The span at 1386–1416 (PTKTPSSSQEPPDEGTSGTDVNKGSSKNALS) shows a compositional bias: polar residues. Ser-1426 bears the Phosphoserine mark. Residues 1434 to 1443 (SSSVDGQSVG) show a composition bias toward polar residues. Acidic residues-rich tracts occupy residues 1458 to 1476 (EEEE…EDEM) and 1510 to 1534 (GESE…EAEG). Residues 1586–1600 (RNNHRARNKRGSRAR) show a composition bias toward basic residues. PAH domains follow at residues 1624-1696 (EQKD…LLPE) and 1706-1777 (EQQA…FDHL). Residues 1809 to 1960 (PDVEEEEEPP…AVGSTLPSPR (152 aa)) are disordered. Basic and acidic residues-rich tracts occupy residues 1836–1848 (NHDK…DGAK) and 1879–1901 (CDSK…HREA). Ser-1896, Ser-1902, and Ser-1977 each carry phosphoserine. 3 disordered regions span residues 2002–2025 (EVRS…AVSE), 2039–2149 (EKLP…VSST), and 2208–2241 (CEAS…ELDE). A Phosphoserine modification is found at Ser-2107. Positions 2140–2149 (CANNSKVSST) are enriched in polar residues. Residues 2148–2201 (STGEKVVLWTREADRVILTMCQEQGAQPQTFNIISQQLGNKTPAEVSHRFRELM) form the Myb-like domain.

In terms of assembly, found in a complex with YY1, SIN3A and HDAC1.

It localises to the nucleus. Functionally, has transcriptional repressor activity, probably as part of a complex with YY1, SIN3A and HDAC1. Required for B cell lymphopoiesis. This is GON-4-like protein (GON4L) from Homo sapiens (Human).